A 368-amino-acid polypeptide reads, in one-letter code: F-box only protein 28 (368 aa).

Residues 1 to 11 show a composition bias toward basic and acidic residues; the sequence is MAAASEERMAE. The interval 1 to 56 is disordered; sequence MAAASEERMAEEGGGGHGDGGSCSAAGSAQRQPPAPPSQAPPPGSQAPAAPALAPD. Positions 12 to 21 are enriched in gly residues; sequence EGGGGHGDGG. Over residues 22–32 the composition is skewed to low complexity; that stretch reads SCSAAGSAQRQ. The span at 33–45 shows a compositional bias: pro residues; sequence PPAPPSQAPPPGS. Residues 46–55 are compositionally biased toward low complexity; the sequence is QAPAAPALAP. The F-box domain maps to 61 to 109; that stretch reads NNTLVALPIVAIENILSFMSYDEISQLRLVCKRMDLVCQRMLNQGFLKV. 2 positions are modified to phosphoserine: S235 and S242. T270 bears the Phosphothreonine mark. The disordered stretch occupies residues 328-368; it reads MESAVGTSSGSGQSEESPRKRRKATEAIDSLRKSKRLRNRK. A Phosphoserine modification is found at S344.

In terms of assembly, part of a SCF (SKP1-cullin-F-box) protein ligase complex.

The protein resides in the chromosome. It is found in the centromere. Its subcellular location is the kinetochore. Functionally, probably recognizes and binds to some phosphorylated proteins and promotes their ubiquitination and degradation. This chain is F-box only protein 28 (Fbxo28), found in Mus musculus (Mouse).